A 364-amino-acid polypeptide reads, in one-letter code: Putative agmatine deiminase (364 aa).

The Amidino-cysteine intermediate role is filled by Cys-355.

The protein belongs to the agmatine deiminase family.

It catalyses the reaction agmatine + H2O = N-carbamoylputrescine + NH4(+). This is Putative agmatine deiminase from Mycoplasma mycoides subsp. mycoides SC (strain CCUG 32753 / NCTC 10114 / PG1).